Reading from the N-terminus, the 957-residue chain is SH3 domain-binding protein 4-A (957 aa).

Residues 54–113 enclose the SH3 1 domain; that stretch reads ENVKEVVAIKDYCPNNFTTLKFSKGEHLYVLDASGGDWWYAHNSTEMGYIPSSYVQPLNY. The 138-residue stretch at 312–449 folds into the ZU5 domain; it reads TSIVCRLDSS…LEPVMYVVMV (138 aa). An SH3 2 domain is found at 649–719; sequence TSLKYGKLLK…HAKNVLVVGK (71 aa).

Homodimer or homooligomer.

The protein resides in the membrane. It is found in the clathrin-coated pit. It localises to the cytoplasmic vesicle. The protein localises to the clathrin-coated vesicle. Its subcellular location is the nucleus. In terms of biological role, possible role in regulating endocytosis of the transferrin receptor at the plasma membrane. Alternatively, may function as a negative regulator of the amino acid-induced TOR signaling by inhibiting the formation of active Rag GTPase complexes. Preferentially binds inactive Rag GTPase complexes and prevents their interaction with the mTORC1 complex inhibiting its relocalization to lysosomes and its activation. Thereby, may indirectly regulate cell growth, proliferation and autophagy. The protein is SH3 domain-binding protein 4-A (sh3bp4-a) of Xenopus laevis (African clawed frog).